A 250-amino-acid polypeptide reads, in one-letter code: tRNA (guanine-N(1)-)-methyltransferase (250 aa).

S-adenosyl-L-methionine is bound by residues G116 and 136-141 (IGDYVL).

This sequence belongs to the RNA methyltransferase TrmD family. As to quaternary structure, homodimer.

It localises to the cytoplasm. The enzyme catalyses guanosine(37) in tRNA + S-adenosyl-L-methionine = N(1)-methylguanosine(37) in tRNA + S-adenosyl-L-homocysteine + H(+). In terms of biological role, specifically methylates guanosine-37 in various tRNAs. The polypeptide is tRNA (guanine-N(1)-)-methyltransferase (Pseudomonas putida (strain W619)).